The chain runs to 495 residues: Polybrominated aromatic compounds synthase (495 aa).

Residue Cys437 coordinates heme.

The protein belongs to the cytochrome P450 family. Heme is required as a cofactor.

In terms of biological role, cytochrome P450 protein involved in the biosynthesis of polybrominated aromatic organic compounds. In the presence of ferredoxin, ferredoxin reductase and NADH, catalyzes the coupling of bromophenols and bromopyrroles, forming various polybrominated biphenyls and hydroxylated polybrominated diphenyl ethers (OH-BDE). Can also mediate the heterocoupling of 3,5-dibromocatechol, forming six different compounds, including polybrominated dibenzo-p-dioxins, which are among the most toxic molecules known to man. The sequence is that of Polybrominated aromatic compounds synthase from Marinomonas mediterranea (strain ATCC 700492 / JCM 21426 / NBRC 103028 / MMB-1).